A 154-amino-acid chain; its full sequence is Endoribonuclease YbeY (154 aa).

Zn(2+) is bound by residues His-113, His-117, and His-123.

It belongs to the endoribonuclease YbeY family. The cofactor is Zn(2+).

It is found in the cytoplasm. Functionally, single strand-specific metallo-endoribonuclease involved in late-stage 70S ribosome quality control and in maturation of the 3' terminus of the 16S rRNA. This chain is Endoribonuclease YbeY, found in Vibrio vulnificus (strain CMCP6).